The sequence spans 1029 residues: Chitin synthase 2 (1029 aa).

Disordered stretches follow at residues 1–160 (MDRP…GARS), 174–216 (SDVD…SHLR), and 234–257 (AHYG…QKSR). Residues 61–77 (PSVSSIHSRPSSISNIP) are compositionally biased toward low complexity. The segment covering 244–257 (DQQRRGVREPQKSR) has biased composition (basic and acidic residues). The N-linked (GlcNAc...) asparagine glycan is linked to Asn348. The next 8 helical transmembrane spans lie at 639 to 659 (WLNG…QLWA), 681 to 701 (VLFT…VAGG), 716 to 736 (LYIF…QFIL), 752 to 772 (SMVI…YIVI), 791 to 811 (NLIV…FIYL), 820 to 840 (SIQY…YAFC), 918 to 938 (YMVV…SEIY), and 952 to 972 (ILWS…TFAI).

It belongs to the chitin synthase family. Class II subfamily.

It localises to the cell membrane. The enzyme catalyses [(1-&gt;4)-N-acetyl-beta-D-glucosaminyl](n) + UDP-N-acetyl-alpha-D-glucosamine = [(1-&gt;4)-N-acetyl-beta-D-glucosaminyl](n+1) + UDP + H(+). In terms of biological role, polymerizes chitin, a structural polymer of the cell wall and septum, by transferring the sugar moiety of UDP-GlcNAc to the non-reducing end of the growing chitin polymer. Plays an important role in cell wall integrity and has distinct functions in invasive hyphae and vegetative hyphae, but is not involved in plant infection. The sequence is that of Chitin synthase 2 from Pyricularia oryzae (strain 70-15 / ATCC MYA-4617 / FGSC 8958) (Rice blast fungus).